The chain runs to 1069 residues: Regulator of nonsense transcripts 1 (1069 aa).

The disordered stretch occupies residues 1 to 86 (MDDSDDEYSR…SEKSLTEEQH (86 aa)). Over residues 28–50 (IGNTQDSQFAYEQFSVPTQSSQA) the composition is skewed to polar residues. Residues 51 to 65 (TDLLPGGTDGTTNDL) are compositionally biased toward low complexity. A compositionally biased stretch (basic and acidic residues) spans 77–86 (SEKSLTEEQH). Positions 87–244 (EQKLPEHACR…VRMEELWRDH (158 aa)) constitute a Upf1 CH-rich domain. 12 residues coordinate Zn(2+): Cys-95, Cys-98, Cys-109, Cys-112, Cys-117, His-127, His-131, His-137, Cys-155, Cys-158, Cys-181, and Cys-185. The interval 95-127 (CRYCGISDPLCVAKCTVCRKWFCNSNDGTSGGH) is C3H. Positions 109–137 (CTVCRKWFCNSNDGTSGGHIVHHMVRSQH) are CC/SHH/C. The interval 155-185 (CYRCGSKNVFNLGFIPGKKDQVVVIICRTPC) is C4. Residues Gln-450, 467–474 (GPPGTGKT), Gln-639, Tyr-676, and Glu-807 each bind ATP. A disordered region spans residues 966 to 1069 (ARNQKDRRRG…MDDLLFSQDC (104 aa)). Positions 991-1013 (SQGMMSQQSQQYPPQGASSQSQY) are enriched in low complexity.

It belongs to the DNA2/NAM7 helicase family. Phosphorylated probably by smg-1. Smg-3 and smg-4 are required for phosphorylation.

It localises to the cytoplasm. The catalysed reaction is ATP + H2O = ADP + phosphate + H(+). Its function is as follows. RNA-dependent helicase required for nonsense-mediated decay (NMD) of aberrant mRNAs containing premature stop codons and modulates the expression level of normal mRNAs. Is recruited to mRNAs upon translation termination and undergoes a cycle of phosphorylation and dephosphorylation; its phosphorylation appears to be a key step in NMD. The formation of an smg-2-3-4 surveillance complex is believed to activate NMD. The protein is Regulator of nonsense transcripts 1 (smg-2) of Caenorhabditis elegans.